Consider the following 678-residue polypeptide: Proprotein convertase subtilisin/kexin type 4 (678 aa).

A signal peptide spans 1–26 (MRPSQTALWLGLVLSLALLAVGWASA). Positions 27-110 (RPPIYVSSWA…QQTLRRRVKR (84 aa)) are excised as a propeptide. The Peptidase S8 domain occupies 123–437 (QWYMNKEIEQ…YGLLDAGLLV (315 aa)). Active-site charge relay system residues include D155, H196, and S370. A P/Homo B domain is found at 446–580 (TKPQKKCTIR…TLLLYGTAED (135 aa)). Residue N472 is glycosylated (N-linked (GlcNAc...) asparagine).

The protein belongs to the peptidase S8 family. Furin subfamily. As to quaternary structure, the proPCSK4 form interacts with HSPA5; the interaction takes place at the endoplasmic reticulum. In terms of processing, N-glycosylated. Synthesized in the endoplasmic reticulum as a zymogen, is matured by autocatalytic cleavage between the prodomain and the catalytic domain. Expressed abundantly in the testis. High levels seen in germ cells but not in Leydig, Sertoli or peritubular cells. Expressed in the pachytene spermatocytes and the round spermatids but not in the elongating spermatids. May be expressed within hormonally stimulated ovaries.

It localises to the cytoplasmic vesicle. The protein localises to the secretory vesicle. The protein resides in the acrosome membrane. Functionally, proprotein convertase involved in the processing of hormone and other protein precursors at sites comprised of pairs of basic amino acid residues. In males, important for ADAM2 processing as well as other acrosomal proteins with roles in fertilization and critical for normal fertilization events such as sperm capacitation, acrosome reaction and binding of sperm to zona pellucida. Plays also a role in female fertility, involved in the regulation of trophoblast migration and placental development, may be through the proteolytical processing and activation of proteins such as IGF2. May also participate in folliculogenesis in the ovaries. The protein is Proprotein convertase subtilisin/kexin type 4 (Pcsk4) of Rattus norvegicus (Rat).